A 356-amino-acid chain; its full sequence is 4-hydroxy-3-methylbut-2-en-1-yl diphosphate synthase (flavodoxin) (356 aa).

[4Fe-4S] cluster contacts are provided by cysteine 262, cysteine 265, cysteine 297, and glutamate 304.

It belongs to the IspG family. It depends on [4Fe-4S] cluster as a cofactor.

It catalyses the reaction (2E)-4-hydroxy-3-methylbut-2-enyl diphosphate + oxidized [flavodoxin] + H2O + 2 H(+) = 2-C-methyl-D-erythritol 2,4-cyclic diphosphate + reduced [flavodoxin]. The protein operates within isoprenoid biosynthesis; isopentenyl diphosphate biosynthesis via DXP pathway; isopentenyl diphosphate from 1-deoxy-D-xylulose 5-phosphate: step 5/6. Its function is as follows. Converts 2C-methyl-D-erythritol 2,4-cyclodiphosphate (ME-2,4cPP) into 1-hydroxy-2-methyl-2-(E)-butenyl 4-diphosphate. In Campylobacter fetus subsp. fetus (strain 82-40), this protein is 4-hydroxy-3-methylbut-2-en-1-yl diphosphate synthase (flavodoxin).